Consider the following 296-residue polypeptide: Homoserine kinase (296 aa).

An ATP-binding site is contributed by 84 to 94 (PLARGLGSSSS).

The protein belongs to the GHMP kinase family. Homoserine kinase subfamily.

The protein resides in the cytoplasm. The enzyme catalyses L-homoserine + ATP = O-phospho-L-homoserine + ADP + H(+). The protein operates within amino-acid biosynthesis; L-threonine biosynthesis; L-threonine from L-aspartate: step 4/5. Functionally, catalyzes the ATP-dependent phosphorylation of L-homoserine to L-homoserine phosphate. In Lactococcus lactis subsp. cremoris (Streptococcus cremoris), this protein is Homoserine kinase (thrB).